A 607-amino-acid polypeptide reads, in one-letter code: UvrABC system protein C (607 aa).

The region spanning 15 to 93 (SEPGVYCMLD…IKKYQPRYNI (79 aa)) is the GIY-YIG domain. One can recognise a UVR domain in the interval 202 to 237 (HEVIADLIKKMEAASQQLNFELAAKVRDQIMLLRKM).

It belongs to the UvrC family. As to quaternary structure, interacts with UvrB in an incision complex.

The protein localises to the cytoplasm. In terms of biological role, the UvrABC repair system catalyzes the recognition and processing of DNA lesions. UvrC both incises the 5' and 3' sides of the lesion. The N-terminal half is responsible for the 3' incision and the C-terminal half is responsible for the 5' incision. This Pseudoalteromonas translucida (strain TAC 125) protein is UvrABC system protein C.